The chain runs to 123 residues: Large-conductance mechanosensitive channel (123 aa).

2 helical membrane passes run 14 to 34 and 67 to 87; these read VIDM…VKSL and GSFL…FLMV.

This sequence belongs to the MscL family. Homopentamer.

Its subcellular location is the cell membrane. Its function is as follows. Channel that opens in response to stretch forces in the membrane lipid bilayer. May participate in the regulation of osmotic pressure changes within the cell. In Limosilactobacillus reuteri (strain DSM 20016) (Lactobacillus reuteri), this protein is Large-conductance mechanosensitive channel.